The primary structure comprises 362 residues: Serine/threonine-protein kinase SBK2 (362 aa).

Over residues 1–11 (MPGKQSEDKPM) the composition is skewed to basic and acidic residues. A disordered region spans residues 1–26 (MPGKQSEDKPMEVSTVEDGGDEGLGG). Residues 62–330 (YEEVRPLGQG…IKSYLGQPWK (269 aa)) form the Protein kinase domain. Residues 68–76 (LGQGRFGRV) and lysine 91 contribute to the ATP site. Aspartate 183 serves as the catalytic Proton acceptor. Positions 329 to 362 (WKQREGEAEELATELREDGWRGGQEAAKGEQPAC) are disordered.

Belongs to the protein kinase superfamily. Ser/Thr protein kinase family. STKL subfamily.

The catalysed reaction is L-seryl-[protein] + ATP = O-phospho-L-seryl-[protein] + ADP + H(+). It carries out the reaction L-threonyl-[protein] + ATP = O-phospho-L-threonyl-[protein] + ADP + H(+). This chain is Serine/threonine-protein kinase SBK2 (Sbk2), found in Mus musculus (Mouse).